The sequence spans 73 residues: UPF0235 protein LA_1736 (73 aa).

Belongs to the UPF0235 family.

The chain is UPF0235 protein LA_1736 from Leptospira interrogans serogroup Icterohaemorrhagiae serovar Lai (strain 56601).